Here is a 405-residue protein sequence, read N- to C-terminus: Diaminopimelate decarboxylase (405 aa).

At Lys-46 the chain carries N6-(pyridoxal phosphate)lysine. Pyridoxal 5'-phosphate contacts are provided by residues Gly-225 and 259 to 262; that span reads EPGR. 3 residues coordinate substrate: Arg-262, Arg-298, and Tyr-302. Cys-329 acts as the Proton donor in catalysis. 2 residues coordinate substrate: Glu-330 and Tyr-358. Tyr-358 is a pyridoxal 5'-phosphate binding site.

This sequence belongs to the Orn/Lys/Arg decarboxylase class-II family. LysA subfamily. Homodimer. It depends on pyridoxal 5'-phosphate as a cofactor.

It carries out the reaction meso-2,6-diaminopimelate + H(+) = L-lysine + CO2. It functions in the pathway amino-acid biosynthesis; L-lysine biosynthesis via DAP pathway; L-lysine from DL-2,6-diaminopimelate: step 1/1. Specifically catalyzes the decarboxylation of meso-diaminopimelate (meso-DAP) to L-lysine. The polypeptide is Diaminopimelate decarboxylase (Helicobacter pylori (Campylobacter pylori)).